We begin with the raw amino-acid sequence, 272 residues long: 3-methyl-2-oxobutanoate hydroxymethyltransferase (272 aa).

Residues Asp-43 and Asp-82 each contribute to the Mg(2+) site. Residues 43–44, Asp-82, and Lys-112 contribute to the 3-methyl-2-oxobutanoate site; that span reads DS. Residue Glu-114 participates in Mg(2+) binding. Glu-179 acts as the Proton acceptor in catalysis.

Belongs to the PanB family. In terms of assembly, homodecamer; pentamer of dimers. Mg(2+) is required as a cofactor.

It is found in the cytoplasm. The catalysed reaction is 3-methyl-2-oxobutanoate + (6R)-5,10-methylene-5,6,7,8-tetrahydrofolate + H2O = 2-dehydropantoate + (6S)-5,6,7,8-tetrahydrofolate. The protein operates within cofactor biosynthesis; (R)-pantothenate biosynthesis; (R)-pantoate from 3-methyl-2-oxobutanoate: step 1/2. Catalyzes the reversible reaction in which hydroxymethyl group from 5,10-methylenetetrahydrofolate is transferred onto alpha-ketoisovalerate to form ketopantoate. The chain is 3-methyl-2-oxobutanoate hydroxymethyltransferase from Staphylococcus epidermidis (strain ATCC 35984 / DSM 28319 / BCRC 17069 / CCUG 31568 / BM 3577 / RP62A).